The chain runs to 488 residues: Glutamyl-tRNA(Gln) amidotransferase subunit A (488 aa).

Catalysis depends on charge relay system residues Lys77 and Ser152. The Acyl-ester intermediate role is filled by Ser176.

It belongs to the amidase family. GatA subfamily. As to quaternary structure, heterotrimer of A, B and C subunits.

The enzyme catalyses L-glutamyl-tRNA(Gln) + L-glutamine + ATP + H2O = L-glutaminyl-tRNA(Gln) + L-glutamate + ADP + phosphate + H(+). In terms of biological role, allows the formation of correctly charged Gln-tRNA(Gln) through the transamidation of misacylated Glu-tRNA(Gln) in organisms which lack glutaminyl-tRNA synthetase. The reaction takes place in the presence of glutamine and ATP through an activated gamma-phospho-Glu-tRNA(Gln). The sequence is that of Glutamyl-tRNA(Gln) amidotransferase subunit A from Streptococcus equi subsp. zooepidemicus (strain MGCS10565).